We begin with the raw amino-acid sequence, 1759 residues long: Zinc finger protein castor homolog 1 (1759 aa).

Disordered regions lie at residues 1 to 26 (MDLGTAEGTRCTDPPAGKPAMAPKRK) and 46 to 175 (KRAD…SSLR). Basic and acidic residues-rich tracts occupy residues 77 to 88 (PRSEEDKRRAVI) and 137 to 160 (EEPSKDGGALEEKDSDGAASKEDS). The span at 161 to 171 (GPSTRQASGEA) shows a compositional bias: polar residues. A Glycyl lysine isopeptide (Lys-Gly) (interchain with G-Cter in SUMO2) cross-link involves residue lysine 288. The tract at residues 374–420 (SKYDVRGIQKPGPAKVPPTPSLAPAPLASVPSAPSAPGPGPEPPASL) is disordered. Residues 387–396 (AKVPPTPSLA) show a composition bias toward pro residues. Low complexity predominate over residues 397–406 (PAPLASVPSA). Over residues 407–417 (PSAPGPGPEPP) the composition is skewed to pro residues. 3 C2H2-type zinc fingers span residues 551–575 (YHCMQVGCNKVYTSTSDVMTHENFH), 610–634 (FHCRRPGCTFTFKNKCDIEKHKSYH), and 668–692 (FHCIRAGCGFTFTSTSQMTSHKRKH). 4 disordered regions span residues 686-723 (TSHKRKHERRHIRSSGALGLPPSLLGAKDTEHEESSND), 736-776 (SSLS…SGLL), 824-843 (VSSGSAASATPDTPTLVASG), and 889-949 (ATFD…AVPA). Positions 687 to 698 (SHKRKHERRHIR) are enriched in basic residues. The span at 699–712 (SSGALGLPPSLLGA) shows a compositional bias: low complexity. A phosphoserine mark is found at serine 720 and serine 721. Residues 736-764 (SSLSASPTSQQSSASLAAATAATEAGPSA) are compositionally biased toward low complexity. A compositionally biased stretch (basic and acidic residues) spans 925–939 (ASQDRSLDLTVKEPS). Residue lysine 975 forms a Glycyl lysine isopeptide (Lys-Gly) (interchain with G-Cter in SUMO2) linkage. Position 981 is a phosphoserine (serine 981). Residues 1031–1055 (FHCVVEECGALFSTLDGAIKHANFH) form a C2H2-type 4 zinc finger. Positions 1067–1111 (TEAAFPASAAETKPPMAPSSPPVPPVTTATVSSLEGPAPSPASVP) are disordered. Positions 1081 to 1091 (PMAPSSPPVPP) are enriched in pro residues. Residues 1300 to 1324 (FHCIREGCQFSFLLKHQMTSHARKH) form a C2H2-type 5 zinc finger. Positions 1367 to 1392 (ESSTMDRSCSSTPVGNESTAAGNTIS) are disordered. 3 C2H2-type zinc fingers span residues 1457 to 1481 (YHCTRENCGYKFCGRTHMYKHAQHH), 1515 to 1537 (FHCLRCRFRCTDSTKVTAHRKHH), and 1571 to 1595 (FHCTFPGCRHTVVGMSQMDSHKRKH). 2 disordered regions span residues 1589–1620 (DSHKRKHEKQERGEPAAEGPAPGPPISLDGSL) and 1643–1736 (LGDA…AGAR). Residues 1655 to 1673 (AAPGPREGAAAAAAAAGES) are compositionally biased toward low complexity. The span at 1674-1723 (SQEDEEEELELPEEEAEDDEDEDDDEDDDDEDDDEDDDDEDLRTDSEESL) shows a compositional bias: acidic residues. Residues 1724–1736 (PEAAAEAAGAGAR) show a composition bias toward low complexity.

Expressed in heart, lung, skeletal muscle, pancreas, testis, small intestine, and stomach, but it is not detectable in the adult brain.

Its subcellular location is the nucleus. Functionally, transcriptional activator. Involved in vascular assembly and morphogenesis through direct transcriptional regulation of EGFL7. The chain is Zinc finger protein castor homolog 1 (CASZ1) from Homo sapiens (Human).